A 322-amino-acid chain; its full sequence is Sideroflexin-1 (322 aa).

S2 is subject to N-acetylserine. At 2–102 the chain is on the mitochondrial matrix side; sequence SGELPPNINI…MSAQVPMNMT (101 aa). The chain crosses the membrane as a helical span at residues 103-120; sequence ITGCMMTFYRTTPAVLFW. Residues 121-146 are Mitochondrial intermembrane-facing; the sequence is QWINQSFNAVVNYTNRSGDAPLTVNE. A helical membrane pass occupies residues 147–167; that stretch reads LGTAYVSATTGAVATALGLNA. Over 168-174 the chain is Mitochondrial matrix; it reads LTKHVSP. A helical transmembrane segment spans residues 175–195; it reads LIGRFVPFAAVAAANCINIPL. Residues 196 to 228 lie on the Mitochondrial intermembrane side of the membrane; that stretch reads MRQRELRAGIPVTDENGNRLGESANAAKQAITQ. A helical membrane pass occupies residues 229-249; it reads VVISRILMAAPGMAIPPFIMN. The Mitochondrial matrix segment spans residues 250-266; it reads TLEKKAFLKRFPWMSAP. Residues 267–287 form a helical membrane-spanning segment; that stretch reads IQVGLVGFCLVFATPLCCALF. At 288–322 the chain is on the mitochondrial intermembrane side; sequence PQKSSMSVTSLEAELQAKIRETSPELRRVYFNKGL.

Belongs to the sideroflexin family.

Its subcellular location is the mitochondrion inner membrane. The catalysed reaction is L-serine(in) = L-serine(out). It catalyses the reaction L-alanine(in) = L-alanine(out). It carries out the reaction L-cysteine(in) = L-cysteine(out). In terms of biological role, amino acid transporter importing serine, an essential substrate of the mitochondrial branch of the one-carbon pathway, into mitochondria. Mitochondrial serine is then converted to glycine and formate, which exits to the cytosol where it is used to generate the charged folates that serve as one-carbon donors. May also transport other amino acids including alanine and cysteine. This is Sideroflexin-1 (SFXN1) from Sus scrofa (Pig).